Here is a 200-residue protein sequence, read N- to C-terminus: Molybdenum cofactor guanylyltransferase (200 aa).

Residues 15–17, lysine 28, aspartate 74, and aspartate 104 each bind GTP; that span reads LSG. Aspartate 104 serves as a coordination point for Mg(2+).

It belongs to the MobA family. Monomer. The cofactor is Mg(2+).

It is found in the cytoplasm. The enzyme catalyses Mo-molybdopterin + GTP + H(+) = Mo-molybdopterin guanine dinucleotide + diphosphate. Its function is as follows. Transfers a GMP moiety from GTP to Mo-molybdopterin (Mo-MPT) cofactor (Moco or molybdenum cofactor) to form Mo-molybdopterin guanine dinucleotide (Mo-MGD) cofactor. The protein is Molybdenum cofactor guanylyltransferase of Pseudomonas fluorescens (strain SBW25).